A 446-amino-acid polypeptide reads, in one-letter code: MEEWDGDVFTWNAGKEDIYTLIESILRLLKNGCKGMENMVVKYLGTGATDSLYMYFPWLRGRDLESRLSVEHQIDRFWKIRFELHEERTNSMDRYEDIVSSFLALDTKCGILGKLEGQMALVDEIRRIYSITSQGSPRKKRLREYRLHGTLCLHPGAGSMRLYASLFSLDATVKEIIFPEIEIFPSSTFPILVPLRTDRGVSRIIYKKGDDLTRDLFVLETIRYMSRLMGVDLVTYKVIPLSRKEGIVEVVDGIDFTRIRSRKDLEMYIEEDRDPRHQESFEKRKVFVSTLCGYSVACYVMGIGDRNPGNMMVTRDGKFFHIDFSHVFGRDPKPISSRITIARPIRDYLVNDELIYQDFLARSGEAFLQIRRSCRKIFVLWCILAQNRIFQFDLNEIIPFAQARLRMEMSEQRALELFEKEIRGAVGSLKTSVAHLINRVGMFLRR.

Positions 177-430 (IFPEIEIFPS…EIRGAVGSLK (254 aa)) constitute a PI3K/PI4K catalytic domain. Residues 183–189 (IFPSSTF) are G-loop. Residues 302–310 (GIGDRNPGN) are catalytic loop. The segment at 321–342 (HIDFSHVFGRDPKPISSRITIA) is activation loop.

This sequence belongs to the PI3/PI4-kinase family. As to quaternary structure, component of the autophagy-specific VPS34 PI3-kinase complex I composed; and of the VPS34 PI3-kinase complex II.

It is found in the golgi apparatus. It localises to the trans-Golgi network membrane. Its subcellular location is the endosome membrane. It carries out the reaction a 1,2-diacyl-sn-glycero-3-phospho-(1D-myo-inositol) + ATP = a 1,2-diacyl-sn-glycero-3-phospho-(1D-myo-inositol-3-phosphate) + ADP + H(+). Functionally, phosphatidylinositol 3-kinase required for cytoplasm to vacuole transport (Cvt) and autophagy as a part of the autophagy-specific VPS34 PI3-kinase complex I. Also involved in endosome-to-Golgi retrograde transport as part of the VPS34 PI3-kinase complex II. This chain is Probable phosphatidylinositol 3-kinase VPS34 homolog (VPS34), found in Encephalitozoon cuniculi (strain GB-M1) (Microsporidian parasite).